The primary structure comprises 453 residues: Phosphoglucosamine mutase (453 aa).

The Phosphoserine intermediate role is filled by serine 105. Mg(2+) is bound by residues serine 105, aspartate 244, aspartate 246, and aspartate 248. Residue serine 105 is modified to Phosphoserine.

Belongs to the phosphohexose mutase family. Requires Mg(2+) as cofactor. Post-translationally, activated by phosphorylation.

The catalysed reaction is alpha-D-glucosamine 1-phosphate = D-glucosamine 6-phosphate. In terms of biological role, catalyzes the conversion of glucosamine-6-phosphate to glucosamine-1-phosphate. This is Phosphoglucosamine mutase from Chromohalobacter salexigens (strain ATCC BAA-138 / DSM 3043 / CIP 106854 / NCIMB 13768 / 1H11).